Here is a 230-residue protein sequence, read N- to C-terminus: Potassium/proton antiporter CemA (230 aa).

The next 4 helical transmembrane spans lie at Leu-7–Phe-27, Ile-106–Leu-126, Leu-145–His-165, and Leu-181–Leu-201.

The protein belongs to the CemA family.

It localises to the plastid. The protein localises to the chloroplast inner membrane. It catalyses the reaction K(+)(in) + H(+)(out) = K(+)(out) + H(+)(in). Functionally, contributes to K(+)/H(+) antiport activity by supporting proton efflux to control proton extrusion and homeostasis in chloroplasts in a light-dependent manner to modulate photosynthesis. Prevents excessive induction of non-photochemical quenching (NPQ) under continuous-light conditions. Indirectly promotes efficient inorganic carbon uptake into chloroplasts. This chain is Potassium/proton antiporter CemA, found in Oryza nivara (Indian wild rice).